The primary structure comprises 757 residues: Dynamin-related protein DNM1 (757 aa).

The Dynamin-type G domain maps to Thr25–Pro333. The G1 motif stretch occupies residues Gly35–Ser42. Gly35–Ser42 contributes to the GTP binding site. The G2 motif stretch occupies residues Val61–Arg63. Residues Asp175–Gly178 are G3 motif. GTP is bound by residues Asp175 to Ile179 and Thr244 to Asp247. Residues Thr244–Asp247 form a G4 motif region. Residues Val274–Ser277 form a G5 motif region. The disordered stretch occupies residues Ser557 to Ala597. The segment covering Thr567–Ile580 has biased composition (low complexity). Ser629 is subject to Phosphoserine. A GED domain is found at Cys670–Leu757.

Belongs to the TRAFAC class dynamin-like GTPase superfamily. Dynamin/Fzo/YdjA family. As to quaternary structure, interacts with FIS1 and MDV1.

The protein resides in the mitochondrion outer membrane. The catalysed reaction is GTP + H2O = GDP + phosphate + H(+). In terms of biological role, microtubule-associated force-producing protein that participates mitochondrial fission. Fission of mitochondria occurs in many cell types and constitutes an important step in mitochondria morphology, which is balanced between fusion and fission. Functions antagonistically with FZO1. This chain is Dynamin-related protein DNM1 (DNM1), found in Saccharomyces cerevisiae (strain ATCC 204508 / S288c) (Baker's yeast).